The sequence spans 297 residues: Putative heme-binding peroxidase (297 aa).

The active-site Proton acceptor is histidine 74. A heme b-binding site is contributed by histidine 198. Tryptophan 214 acts as the Tryptophan radical intermediate in catalysis.

This sequence belongs to the peroxidase family. Cytochrome c peroxidase subfamily. Heme b is required as a cofactor.

Its function is as follows. Destroys radicals which are normally produced within the cells and which are toxic to biological systems. This Yarrowia lipolytica (strain CLIB 122 / E 150) (Yeast) protein is Putative heme-binding peroxidase.